The sequence spans 103 residues: Large ribosomal subunit protein bL21 (103 aa).

This sequence belongs to the bacterial ribosomal protein bL21 family. Part of the 50S ribosomal subunit. Contacts protein L20.

Its function is as follows. This protein binds to 23S rRNA in the presence of protein L20. This chain is Large ribosomal subunit protein bL21, found in Chloroflexus aurantiacus (strain ATCC 29364 / DSM 637 / Y-400-fl).